The sequence spans 193 residues: MDNLRETFLSLEDGLGSSDSPGLLSSWDWKDRAGPFELNQASPSQSLSPAPSLESYSSSPCPAVAGLPCEHGGASSGGSEGCSVGGASGLVEVDYNMLAFQPTHLQGGGGPKAQKGTKVRMSVQRRRKASEREKLRMRTLADALHTLRNYLPPVYSQRGQPLTKIQTLKYTIKYIGELTDLLNRGREPRAQSA.

The tract at residues 34–59 is disordered; it reads GPFELNQASPSQSLSPAPSLESYSSS. Low complexity predominate over residues 40–59; it reads QASPSQSLSPAPSLESYSSS. The 55-residue stretch at 124 to 178 folds into the bHLH domain; it reads QRRRKASEREKLRMRTLADALHTLRNYLPPVYSQRGQPLTKIQTLKYTIKYIGEL.

Its subcellular location is the nucleus. In terms of biological role, involved in specifying the paraxial, but not dorsal, mesoderm. May regulate the expression of T-box transcription factors required for mesoderm formation and differentiation. The polypeptide is Mesogenin-1 (MSGN1) (Homo sapiens (Human)).